Reading from the N-terminus, the 359-residue chain is Peptide chain release factor 1 (359 aa).

An N5-methylglutamine modification is found at Gln236.

This sequence belongs to the prokaryotic/mitochondrial release factor family. Post-translationally, methylated by PrmC. Methylation increases the termination efficiency of RF1.

Its subcellular location is the cytoplasm. In terms of biological role, peptide chain release factor 1 directs the termination of translation in response to the peptide chain termination codons UAG and UAA. The chain is Peptide chain release factor 1 from Streptococcus pyogenes serotype M1.